Reading from the N-terminus, the 205-residue chain is GTP-binding protein rho3 (205 aa).

Position 20 to 27 (20 to 27 (GDGAAGKT)) interacts with GTP. The short motif at 42–50 (YEPTIFENY) is the Effector region element. GTP contacts are provided by residues 67–71 (DTAGQ) and 125–128 (LKCD). A Cysteine methyl ester modification is found at Cys-202. A lipid anchor (S-geranylgeranyl cysteine) is attached at Cys-202. The propeptide at 203–205 (IIA) is removed in mature form.

The protein belongs to the small GTPase superfamily. Rho family. In terms of assembly, interacts with for3. Post-translationally, palmitoylated by the erf2-erf4 complex.

It is found in the cell membrane. Involved in controlling cell shape and septation. Regulates cell separation by modulating the function of the exocyst complex. Involved in post-Golgi vesicle transport. Involved in driving sexual development in a palmitoylation-dependent manner. This Schizosaccharomyces pombe (strain 972 / ATCC 24843) (Fission yeast) protein is GTP-binding protein rho3 (rho3).